A 143-amino-acid chain; its full sequence is Nucleoside diphosphate kinase (143 aa).

Residues K10, F58, R86, T92, R103, and N113 each coordinate ATP. H116 (pros-phosphohistidine intermediate) is an active-site residue.

This sequence belongs to the NDK family. In terms of assembly, homotetramer. It depends on Mg(2+) as a cofactor.

It is found in the cytoplasm. It catalyses the reaction a 2'-deoxyribonucleoside 5'-diphosphate + ATP = a 2'-deoxyribonucleoside 5'-triphosphate + ADP. The enzyme catalyses a ribonucleoside 5'-diphosphate + ATP = a ribonucleoside 5'-triphosphate + ADP. Its function is as follows. Major role in the synthesis of nucleoside triphosphates other than ATP. The ATP gamma phosphate is transferred to the NDP beta phosphate via a ping-pong mechanism, using a phosphorylated active-site intermediate. The protein is Nucleoside diphosphate kinase of Ehrlichia ruminantium (strain Welgevonden).